A 309-amino-acid chain; its full sequence is Haloalkane dehalogenase (309 aa).

Residues 37-148 (PTVLFLHGNP…FERWEDFHQR (112 aa)) enclose the AB hydrolase-1 domain. Asp-110 acts as the Nucleophile in catalysis. Glu-134 serves as the catalytic Proton donor. The active-site Proton acceptor is His-278.

It belongs to the haloalkane dehalogenase family. Type 2 subfamily. In terms of assembly, monomer.

It catalyses the reaction 1-haloalkane + H2O = a halide anion + a primary alcohol + H(+). Functionally, catalyzes hydrolytic cleavage of carbon-halogen bonds in halogenated aliphatic compounds, leading to the formation of the corresponding primary alcohols, halide ions and protons. In Mesorhizobium japonicum (strain LMG 29417 / CECT 9101 / MAFF 303099) (Mesorhizobium loti (strain MAFF 303099)), this protein is Haloalkane dehalogenase.